The primary structure comprises 167 residues: uncharacterized protein (167 aa).

It is found in the mitochondrion. This is an uncharacterized protein from Ascobolus immersus.